The chain runs to 419 residues: Monooxygenase CTB7 (419 aa).

This sequence belongs to the aromatic-ring hydroxylase family. KMO subfamily.

It functions in the pathway mycotoxin biosynthesis. Monooxygenase; part of the gene cluster that mediates the biosynthesis of cercosporin, a light-activated, non-host-selective toxin. The perylenequinone chromophore of cercosporin absorbs light energy to attain an electronically-activated triplet state and produces active oxygen species such as the hydroxyl radical, superoxide, hydrogen peroxide or singlet oxygen upon reaction with oxygen molecules. These reactive oxygen species cause damage to various cellular components including lipids, proteins and nucleic acids. The first step of cercosporin biosynthesis is performed by the polyketide synthase CTB1 which catalyzes the formation of nor-toralactone. The starter unit acyltransferase (SAT) domain of CTB1 initiates polyketide extension by the selective utilization of acetyl-CoA, which is elongated to the heptaketide in the beta-ketoacyl synthase (KS) domain by successive condensations with six malonyl units introduced by the malonyl acyltransferase (MAT) domain. The product template (PT) domain catalyzes C4-C9 and C2-C11 aldol cyclizations and dehydrations to a trihydroxynaphthalene, which is thought to be delivered to the thioesterase (TE) domain for product release. The bifunctional enzyme CTB3 then methylates nor-toralactone to toralactone before conducting an unusual oxidative aromatic ring opening. The O-methyltransferase CTB2 further methylates the nascent OH-6 of the CBT3 product, blocking further oxidation at this site before the reductase CTB6 reduces the 2-oxopropyl ketone at position C7, giving naphthalene. The FAD-dependent monooxygenase CTB5 in concert with the multicopper oxidase CTB12 are responsible for homodimerization of naphthalene with CTB7 installing the dioxepine moiety, finally producing cercosporin. The fasciclin domain-containing protein CTB11 might act with CTB5 and CTB12 whereas the roles of CTB9 and CTB10 have still to be elucidated. This is Monooxygenase CTB7 from Cercospora beticola (Sugarbeet leaf spot fungus).